Consider the following 86-residue polypeptide: Small ribosomal subunit protein bS20 (86 aa).

The segment at 1–22 (MANIKSQIKRIRTNERRRLRNQ) is disordered. Positions 7 to 20 (QIKRIRTNERRRLR) are enriched in basic residues.

Belongs to the bacterial ribosomal protein bS20 family.

Functionally, binds directly to 16S ribosomal RNA. The chain is Small ribosomal subunit protein bS20 from Mycolicibacterium smegmatis (strain ATCC 700084 / mc(2)155) (Mycobacterium smegmatis).